A 506-amino-acid polypeptide reads, in one-letter code: Maturase K (506 aa).

The protein belongs to the intron maturase 2 family. MatK subfamily.

The protein localises to the plastid. Its subcellular location is the chloroplast. Functionally, usually encoded in the trnK tRNA gene intron. Probably assists in splicing its own and other chloroplast group II introns. This is Maturase K from Trifolium hirtum (Rose clover).